The primary structure comprises 319 residues: Ribonucleoside-diphosphate reductase small chain (319 aa).

Fe cation-binding residues include aspartate 70, glutamate 101, and histidine 104. Residue tyrosine 108 is part of the active site. Glutamate 163, glutamate 197, and histidine 200 together coordinate Fe cation. The interval 313–319 (FSLDVDF) is interaction with R1.

Belongs to the ribonucleoside diphosphate reductase small chain family. Interacts with RNR1/OPG080 subunit. Can interact with host RNR1 supunit. Fe cation serves as cofactor.

It catalyses the reaction a 2'-deoxyribonucleoside 5'-diphosphate + [thioredoxin]-disulfide + H2O = a ribonucleoside 5'-diphosphate + [thioredoxin]-dithiol. Ribonucleoside-diphosphate reductase holoenzyme provides the precursors necessary for viral DNA synthesis. Allows virus growth in non-dividing cells. Catalyzes the biosynthesis of deoxyribonucleotides from the corresponding ribonucleotides. The chain is Ribonucleoside-diphosphate reductase small chain (OPG048) from Vaccinia virus (strain L-IVP) (VACV).